The chain runs to 124 residues: Small ribosomal subunit protein uS12 (124 aa).

D89 bears the 3-methylthioaspartic acid mark. A disordered region spans residues 105–124 (AGVKDRKKGRSKYGAKRPKA). Residues 109-124 (DRKKGRSKYGAKRPKA) show a composition bias toward basic residues.

Belongs to the universal ribosomal protein uS12 family. As to quaternary structure, part of the 30S ribosomal subunit. Contacts proteins S8 and S17. May interact with IF1 in the 30S initiation complex.

With S4 and S5 plays an important role in translational accuracy. In terms of biological role, interacts with and stabilizes bases of the 16S rRNA that are involved in tRNA selection in the A site and with the mRNA backbone. Located at the interface of the 30S and 50S subunits, it traverses the body of the 30S subunit contacting proteins on the other side and probably holding the rRNA structure together. The combined cluster of proteins S8, S12 and S17 appears to hold together the shoulder and platform of the 30S subunit. In Dichelobacter nodosus (strain VCS1703A), this protein is Small ribosomal subunit protein uS12.